Here is a 289-residue protein sequence, read N- to C-terminus: 33 kDa chaperonin (289 aa).

2 cysteine pairs are disulfide-bonded: Cys-229–Cys-231 and Cys-262–Cys-265.

It belongs to the HSP33 family. In terms of processing, under oxidizing conditions two disulfide bonds are formed involving the reactive cysteines. Under reducing conditions zinc is bound to the reactive cysteines and the protein is inactive.

The protein resides in the cytoplasm. Redox regulated molecular chaperone. Protects both thermally unfolding and oxidatively damaged proteins from irreversible aggregation. Plays an important role in the bacterial defense system toward oxidative stress. This Pectobacterium carotovorum subsp. carotovorum (strain PC1) protein is 33 kDa chaperonin.